The chain runs to 1742 residues: NACHT and WD repeat domain-containing protein 2 (1742 aa).

LRR repeat units follow at residues 386-410, 677-698, 724-747, 883-906, and 925-953; these read FYEY…GHIN, LEDV…TRPS, VKNV…LYLQ, YSQE…VIAF, and LPKL…SSMD. The region spanning 410 to 737 is the NACHT domain; that stretch reads NPLVVYGGPC…TLLVWANRHL (328 aa). 11 WD repeats span residues 963-1004, 1007-1046, 1140-1179, 1229-1271, 1272-1311, 1314-1353, 1355-1394, 1396-1434, 1476-1516, 1522-1561, and 1614-1653; these read LASS…LLRQ, TAQS…LLSE, FSGG…NPQL, RHNE…ASLQ, ESSG…AMSN, KTGK…IEAV, KHEG…NLFR, NGQR…RVCN, EDGI…ICRR, NFLK…LRVV, and SLYK…DAAL. The disordered stretch occupies residues 1702-1721; the sequence is PITVSDSSESNEATPSKKHN. A compositionally biased stretch (polar residues) spans 1703–1715; the sequence is ITVSDSSESNEAT.

In Mus musculus (Mouse), this protein is NACHT and WD repeat domain-containing protein 2 (Nwd2).